A 360-amino-acid polypeptide reads, in one-letter code: DNA replication and repair protein RecF (360 aa).

30 to 37 (GENGAGKT) contributes to the ATP binding site.

The protein belongs to the RecF family.

It localises to the cytoplasm. In terms of biological role, the RecF protein is involved in DNA metabolism; it is required for DNA replication and normal SOS inducibility. RecF binds preferentially to single-stranded, linear DNA. It also seems to bind ATP. The sequence is that of DNA replication and repair protein RecF from Deinococcus deserti (strain DSM 17065 / CIP 109153 / LMG 22923 / VCD115).